The primary structure comprises 533 residues: E3 ubiquitin-protein ligase arih1l (533 aa).

2 disordered regions span residues 1–35 (MDSD…EAVD) and 48–73 (PAVA…QEDE). The TRIAD supradomain stretch occupies residues 158 to 369 (QDLPCQICYL…SAWYNCNRYN (212 aa)). Zn(2+) contacts are provided by Cys162, Cys165, Cys179, His181, Cys184, Cys187, Cys207, Cys212, Cys252, Cys257, Cys273, Cys275, Cys280, Cys283, His288, Cys293, Cys320, and Cys323. The RING-type 1 zinc finger occupies 162–212 (CQICYLNYPNSYFTGLECGHKFCMQCWGDYLTTKIIEEGMGQTISCPAHNC). The segment at 232 to 293 (LKYQHLITNS…GENWHDPVKC (62 aa)) adopts an IBR-type zinc-finger fold. The segment at 320-351 (CPKCHVTIEKDGGCNHMVCRNQNCKAEFCWVC) adopts an RING-type 2; atypical zinc-finger fold. The active site involves Cys333. Residues Cys338, Cys343, Cys348, Cys351, His358, and Cys365 each contribute to the Zn(2+) site. Positions 409–425 (KLYAQVKQKMEEMQQHN) form a coiled coil.

It belongs to the RBR family. Ariadne subfamily.

It is found in the cytoplasm. The enzyme catalyses [E2 ubiquitin-conjugating enzyme]-S-ubiquitinyl-L-cysteine + [acceptor protein]-L-lysine = [E2 ubiquitin-conjugating enzyme]-L-cysteine + [acceptor protein]-N(6)-ubiquitinyl-L-lysine.. Its pathway is protein modification; protein ubiquitination. Functionally, E3 ubiquitin-protein ligase, which catalyzes polyubiquitination of target proteins together with ubiquitin-conjugating enzyme E2 ube2l3. This chain is E3 ubiquitin-protein ligase arih1l (arih1l), found in Danio rerio (Zebrafish).